Reading from the N-terminus, the 265-residue chain is Silaffin-1 (265 aa).

A signal peptide spans 1 to 19; the sequence is MKLTAIFPLLFTAVGYCAA. The propeptide at 20–107 is acidic; that stretch reads QSIADLAAAN…DSEEEELRIL (88 aa). Positions 37–106 are disordered; it reads SAQLISADSS…EDSEEEELRI (70 aa). Low complexity predominate over residues 51 to 90; sequence DSSVESVDAASSDVSGSSVESVDVSGSSLESVDVSGSSLE. The span at 91-103 shows a compositional bias: acidic residues; the sequence is SVDDSSEDSEEEE. One copy of the R1; atypical repeat lies at 108–140; the sequence is SSKKSGSYYSYGTKKSGSYSGYSTKKSASRRIL. Positions 108–257 are 7 X 19 AA repeat of S-S-K-K-S-G-S-Y-S-G-S-K-G-S-K-R-R-[IL]-L; it reads SSKKSGSYYS…GSKGSKRRIL (150 aa). Lys110 is modified (N6-poly(methylaminopropyl)lysine). N6,N6-dimethyllysine is present on Lys111. The segment covering 122-133 has biased composition (low complexity); it reads KSGSYSGYSTKK. The segment at 122 to 265 is disordered; sequence KSGSYSGYST…ILSGGLRGSM (144 aa). A propeptide spanning residues 137 to 140 is cleaved from the precursor; that stretch reads RRIL. One copy of the R2; atypical repeat lies at 141 to 162; it reads SSKKSGSYSGYSTKKSGSRRIL. Residues 142–155 show a composition bias toward low complexity; that stretch reads SKKSGSYSGYSTKK. Lys143 is modified (N6-poly(methylaminopropyl)lysine). Lys144 carries the post-translational modification N6,N6-dimethyllysine. Lys154 carries the post-translational modification N6-poly(methylaminopropyl)lysine. Lys155 bears the N6,N6-dimethyllysine mark. Residues 159–162 constitute a propeptide that is removed on maturation; sequence RRIL. A phosphoserine mark is found at Ser163 and Ser164. Residues 163–181 form an R3 repeat; that stretch reads SSKKSGSYSGSKGSKRRIL. Low complexity predominate over residues 164 to 174; that stretch reads SKKSGSYSGSK. At Lys165 the chain carries N6-poly(methylaminopropyl)lysine. Position 166 is an N6,N6-dimethyllysine (Lys166). Phosphoserine occurs at positions 167, 169, 171, and 173. Lys174 carries the N6,N6,N6-trimethyl-5-hydroxylysine modification. At Ser176 the chain carries Phosphoserine. An N6-poly(methylaminopropyl)lysine modification is found at Lys177. The propeptide occupies 178–181; that stretch reads RRIL. Phosphoserine occurs at positions 182 and 183. One copy of the R4 repeat lies at 182 to 200; that stretch reads SSKKSGSYSGSKGSKRRNL. Residues 183-193 show a composition bias toward low complexity; the sequence is SKKSGSYSGSK. An N6-poly(methylaminopropyl)lysine modification is found at Lys184. Lys185 carries the N6,N6-dimethyllysine modification. Phosphoserine is present on residues Ser186, Ser188, Ser190, and Ser192. Lys193 bears the N6,N6,N6-trimethyl-5-hydroxylysine mark. At Ser195 the chain carries Phosphoserine. N6-poly(methylaminopropyl)lysine is present on Lys196. Residues 197–200 constitute a propeptide that is removed on maturation; it reads RRNL. 2 positions are modified to phosphoserine: Ser201 and Ser202. The R5 repeat unit spans residues 201–219; it reads SSKKSGSYSGSKGSKRRIL. Over residues 202-212 the composition is skewed to low complexity; it reads SKKSGSYSGSK. The residue at position 203 (Lys203) is an N6-poly(methylaminopropyl)lysine. N6,N6-dimethyllysine is present on Lys204. A phosphoserine mark is found at Ser205, Ser207, Ser209, and Ser211. An N6,N6,N6-trimethyl-5-hydroxylysine modification is found at Lys212. Ser214 is modified (phosphoserine). Lys215 carries the post-translational modification N6-poly(methylaminopropyl)lysine. Positions 216-219 are excised as a propeptide; that stretch reads RRIL. Phosphoserine is present on residues Ser220 and Ser221. An R6 repeat occupies 220-238; it reads SSKKSGSYSGSKGSKRRNL. Residues 221 to 231 show a composition bias toward low complexity; that stretch reads SKKSGSYSGSK. Residue Lys222 is modified to N6-poly(methylaminopropyl)lysine. Lys223 carries the post-translational modification N6,N6-dimethyllysine. Residues Ser224, Ser226, Ser228, and Ser230 each carry the phosphoserine modification. Position 231 is an N6,N6,N6-trimethyl-5-hydroxylysine (Lys231). Residue Ser233 is modified to Phosphoserine. Lys234 bears the N6-poly(methylaminopropyl)lysine mark. The propeptide occupies 235–238; the sequence is RRNL. Phosphoserine is present on residues Ser239 and Ser240. The R7 repeat unit spans residues 239 to 257; the sequence is SSKKSGSYSGSKGSKRRIL. Low complexity predominate over residues 240–250; the sequence is SKKSGSYSGSK. Position 241 is an N6-poly(methylaminopropyl)lysine (Lys241). Lys242 bears the N6,N6-dimethyllysine mark. Phosphoserine occurs at positions 243, 245, 247, and 249. Lys250 carries the post-translational modification N6,N6,N6-trimethyl-5-hydroxylysine. Ser252 carries the post-translational modification Phosphoserine. An N6-poly(methylaminopropyl)lysine modification is found at Lys253. The propeptide occupies 254–265; sequence RRILSGGLRGSM.

In terms of assembly, silaffin-1A peptides form large aggregates via electrostatic interactions due to intermolecular interactions between the negatively charged phosphate groups and the polyamine moieties. Post-translationally, N6-polymethylaminopropylated. Two lysine residues of each peptide bears 6 to 11 repeats of methyl-propylamine, which gives a possible template for nucleation, and may also control the silica colloid size within the silica deposition vesicle (SDV). In terms of processing, phosphorylated. All serine residues of the Silaffin-1A1 peptide are phosphorylated. Only minor amounts of the Silaffin-1A2 peptide are phosphorylated. Phosphorylation is essential for the activity. It may represent a source of anions required for silica formation of diatoms.

In terms of biological role, catalyzes the polymerization of silica spheres from a silicilic acid solution. It therefore plays a central role in the formation of silica cell wall of diatoms. The protein is Silaffin-1 (SIL1) of Cylindrotheca fusiformis (Marine diatom).